A 268-amino-acid chain; its full sequence is Tryptophan synthase alpha chain (268 aa).

Active-site proton acceptor residues include Glu49 and Asp60.

This sequence belongs to the TrpA family. As to quaternary structure, tetramer of two alpha and two beta chains.

It catalyses the reaction (1S,2R)-1-C-(indol-3-yl)glycerol 3-phosphate + L-serine = D-glyceraldehyde 3-phosphate + L-tryptophan + H2O. It functions in the pathway amino-acid biosynthesis; L-tryptophan biosynthesis; L-tryptophan from chorismate: step 5/5. Its function is as follows. The alpha subunit is responsible for the aldol cleavage of indoleglycerol phosphate to indole and glyceraldehyde 3-phosphate. This Xanthomonas oryzae pv. oryzae (strain MAFF 311018) protein is Tryptophan synthase alpha chain.